Consider the following 502-residue polypeptide: Glycerol kinase (502 aa).

Threonine 14 is a binding site for ADP. Residues threonine 14, threonine 15, and serine 16 each contribute to the ATP site. Sn-glycerol 3-phosphate is bound at residue threonine 14. Arginine 18 serves as a coordination point for ADP. Sn-glycerol 3-phosphate contacts are provided by arginine 84, glutamate 85, tyrosine 136, and aspartate 246. Glycerol contacts are provided by arginine 84, glutamate 85, tyrosine 136, aspartate 246, and glutamine 247. Residues threonine 268 and glycine 311 each coordinate ADP. Threonine 268, glycine 311, glutamine 315, and glycine 412 together coordinate ATP. Residues glycine 412 and asparagine 416 each coordinate ADP.

The protein belongs to the FGGY kinase family. Homotetramer and homodimer (in equilibrium). Heterodimer with EIIA-Glc. Binds 1 zinc ion per glycerol kinase EIIA-Glc dimer. The zinc ion is important for dimerization.

The catalysed reaction is glycerol + ATP = sn-glycerol 3-phosphate + ADP + H(+). The protein operates within polyol metabolism; glycerol degradation via glycerol kinase pathway; sn-glycerol 3-phosphate from glycerol: step 1/1. Activity of this regulatory enzyme is affected by several metabolites. Allosterically and non-competitively inhibited by fructose 1,6-bisphosphate (FBP) and unphosphorylated phosphocarrier protein EIIA-Glc (III-Glc), an integral component of the bacterial phosphotransferase (PTS) system. Functionally, key enzyme in the regulation of glycerol uptake and metabolism. Catalyzes the phosphorylation of glycerol to yield sn-glycerol 3-phosphate. The chain is Glycerol kinase from Escherichia coli O8 (strain IAI1).